The chain runs to 629 residues: tRNA uridine 5-carboxymethylaminomethyl modification enzyme MnmG (629 aa).

FAD contacts are provided by residues 13–18, Val125, and Ser180; that span reads GGGHAG. 273–287 is an NAD(+) binding site; it reads GPRYCPSIEDKVMRF. An FAD-binding site is contributed by Gln370.

Belongs to the MnmG family. In terms of assembly, homodimer. Heterotetramer of two MnmE and two MnmG subunits. The cofactor is FAD.

Its subcellular location is the cytoplasm. Its function is as follows. NAD-binding protein involved in the addition of a carboxymethylaminomethyl (cmnm) group at the wobble position (U34) of certain tRNAs, forming tRNA-cmnm(5)s(2)U34. The protein is tRNA uridine 5-carboxymethylaminomethyl modification enzyme MnmG of Shigella dysenteriae serotype 1 (strain Sd197).